The chain runs to 204 residues: RNA-free ribonuclease P (204 aa).

The protein belongs to the HARP family.

It catalyses the reaction Endonucleolytic cleavage of RNA, removing 5'-extranucleotides from tRNA precursor.. In terms of biological role, RNA-free RNase P that catalyzes the removal of the 5'-leader sequence from pre-tRNA to produce the mature 5'-terminus. This chain is RNA-free ribonuclease P, found in Pyrococcus horikoshii (strain ATCC 700860 / DSM 12428 / JCM 9974 / NBRC 100139 / OT-3).